We begin with the raw amino-acid sequence, 208 residues long: Imidazole glycerol phosphate synthase subunit HisH (208 aa).

Residues 1–206 (MIVIIDYDTG…KEVTESCKSS (206 aa)) enclose the Glutamine amidotransferase type-1 domain. C79 serves as the catalytic Nucleophile. Catalysis depends on residues H181 and E183.

In terms of assembly, heterodimer of HisH and HisF.

It is found in the cytoplasm. It carries out the reaction 5-[(5-phospho-1-deoxy-D-ribulos-1-ylimino)methylamino]-1-(5-phospho-beta-D-ribosyl)imidazole-4-carboxamide + L-glutamine = D-erythro-1-(imidazol-4-yl)glycerol 3-phosphate + 5-amino-1-(5-phospho-beta-D-ribosyl)imidazole-4-carboxamide + L-glutamate + H(+). The catalysed reaction is L-glutamine + H2O = L-glutamate + NH4(+). The protein operates within amino-acid biosynthesis; L-histidine biosynthesis; L-histidine from 5-phospho-alpha-D-ribose 1-diphosphate: step 5/9. IGPS catalyzes the conversion of PRFAR and glutamine to IGP, AICAR and glutamate. The HisH subunit catalyzes the hydrolysis of glutamine to glutamate and ammonia as part of the synthesis of IGP and AICAR. The resulting ammonia molecule is channeled to the active site of HisF. The protein is Imidazole glycerol phosphate synthase subunit HisH of Listeria innocua serovar 6a (strain ATCC BAA-680 / CLIP 11262).